Consider the following 309-residue polypeptide: Zinc transporter ZIP2 (309 aa).

Over 1–8 (MEVLLGVK) the chain is Extracellular. The helical transmembrane segment at 9-29 (IGCLLALLVLTLGCGLTPIYV) threads the bilayer. The Cytoplasmic portion of the chain corresponds to 30 to 43 (KWFQMDAATGHHHR). The helical transmembrane segment at 44–64 (VLSLLGCTSAGVFLGAGLMHM) threads the bilayer. Residues 65–103 (TAEALEGIESEIQKFVEQNSTGSKGNSSRDAASSYVEYP) lie on the Extracellular side of the membrane. A helical membrane pass occupies residues 104–124 (YGELVISLGFFFVFLLESLAL). The Cytoplasmic portion of the chain corresponds to 125 to 164 (QCCHGAAGGSTVQEEEWGGTHAFGFHKHPAVPSPSRGPLR). The helical transmembrane segment at 165 to 185 (ALVLLLSLSFHSVFEGLAVGL) threads the bilayer. Zn(2+) contacts are provided by His175 and Glu179. The Extracellular portion of the chain corresponds to 186–191 (QATVAA). Residues 192–212 (TIQLCVAVLAHKGLVVFSVGL) traverse the membrane as a helical segment. Position 202 (His202) interacts with Zn(2+). At 213 to 225 (RLGKIGTGPRWAT) the chain is on the cytoplasmic side. The chain crosses the membrane as a helical span at residues 226–246 (FCILSLALMSPVGLALGLTVA). The Extracellular portion of the chain corresponds to 247–258 (GGASGQTQGLAQ). A helical membrane pass occupies residues 259-279 (AVLEGIAAGTFLYVTFLEILP). Glu276 is a binding site for Zn(2+). At 280 to 288 (RELACPEAP) the chain is on the cytoplasmic side. The helical transmembrane segment at 289–309 (LAKYSCVAAGFAFMALIALWA) threads the bilayer.

This sequence belongs to the ZIP transporter (TC 2.A.5) family. As to expression, high expression in the liver, skin and ovary.

It localises to the cell membrane. The catalysed reaction is Zn(2+)(in) = Zn(2+)(out). The enzyme catalyses Cd(2+)(in) = Cd(2+)(out). Functionally, transporter for the divalent cation Zn(2+). Mediates the influx of Zn(2+) into cells from extracellular space. The Zn(2+) uniporter activity is independent of H(+)-driving force, but is modulated by extracellular pH and membrane potential. Transports also other divalent cations Zn(2+), Cd2(+), Cu2(+), Co2(+) in the order of decreasing affinity, respectively. In the skin, aids in the differentiation of keratinocytes in the epidermis. This is Zinc transporter ZIP2 (Slc39a2) from Mus musculus (Mouse).